The sequence spans 445 residues: MEVVLHEGDAKDWVYKGEGAANLILSYTGSSPSMLGKVLRVKKILKDKGQPAPNCIVFSSHEEHLWGKIPGLLESVKNDCLPQAYATIVMSQHLGANHVDGGVRVRVSKNFFELAGKNVLDNRPAWRVNASAIDAGADSALLISDHTLFSGNPRGSSCIAVEIKAKCGFLPSSEYISKENSIKKQVTRYKMHQHLKFHLGEISKTSEYDPLDLFSGSKERIHMAIKSFFSTPQNNFRIFVDGSLVFGGMGGGADSVHPNETEKCLEDLSKVTGLQLSDFIELLSEAIFKSGVLGKLLATQKLDDHDIEGAIHLYYNIISQPCLVCKSITDTELLRKYSTLHSLPLDKSEKIVRDFLISATAKDCSLMISFRPRQSGTTDSEYDSVFLDSVNQSYDYKAYFIDLDVKPLDKMVHYFKLDQKIVNFYTRNGEVGGDPRDPPKGCGPR.

Residues 19–22 and arginine 40 contribute to the ATP site; that span reads GAAN. Arginine 127 is a substrate binding site. ATP-binding positions include 144-146 and 162-164; these read SDH and EIK. The short motif at 162-166 is the EXKPK motif element; it reads EIKAK. Positions 166, 196, and 234 each coordinate substrate. Arginine 237 serves as a coordination point for ATP. Positions 312, 322, 325, and 341 each coordinate Zn(2+). Aspartate 363 lines the substrate pocket. Aspartate 402 is an ATP binding site. Substrate contacts are provided by lysine 406, lysine 410, and tyrosine 414.

This sequence belongs to the IPK1 type 2 family. Zn(2+) is required as a cofactor.

It catalyses the reaction 1D-myo-inositol 1,3,4,5,6-pentakisphosphate + ATP = 1D-myo-inositol hexakisphosphate + ADP + H(+). In terms of biological role, phosphorylates Ins(1,3,4,5,6)P5 at position 2 to form Ins(1,2,3,4,5,6)P6 (InsP6 or phytate). Phytate is a regulator of intracellular signaling, a highly abundant animal antinutrient, and a phosphate store in plant seeds. Also phosphorylates Ins(1,3,4,6)P4 and Ins(1,4,5,6)P4 to produce Ins(1,2,3,4,6)P5 and Ins(1,2,4,5,6)P5. This Oryza sativa subsp. indica (Rice) protein is Inositol-pentakisphosphate 2-kinase IPK1.